Here is a 172-residue protein sequence, read N- to C-terminus: Adenine phosphoribosyltransferase (172 aa).

It belongs to the purine/pyrimidine phosphoribosyltransferase family. In terms of assembly, homodimer.

It is found in the cytoplasm. It carries out the reaction AMP + diphosphate = 5-phospho-alpha-D-ribose 1-diphosphate + adenine. Its pathway is purine metabolism; AMP biosynthesis via salvage pathway; AMP from adenine: step 1/1. Functionally, catalyzes a salvage reaction resulting in the formation of AMP, that is energically less costly than de novo synthesis. In Nostoc punctiforme (strain ATCC 29133 / PCC 73102), this protein is Adenine phosphoribosyltransferase.